We begin with the raw amino-acid sequence, 140 residues long: Large ribosomal subunit protein uL13 (140 aa).

Belongs to the universal ribosomal protein uL13 family. In terms of assembly, part of the 50S ribosomal subunit.

In terms of biological role, this protein is one of the early assembly proteins of the 50S ribosomal subunit, although it is not seen to bind rRNA by itself. It is important during the early stages of 50S assembly. The polypeptide is Large ribosomal subunit protein uL13 (Methanosarcina barkeri (strain Fusaro / DSM 804)).